A 181-amino-acid polypeptide reads, in one-letter code: MALKDLFERDVQELEREGILFTTLEKLVAWGRSNSLWPATFGLACCAIEMMASTDARNDLARFGSEVFRASPRQADVMIVAGRLSKKMAPVMRRVWEQMPDPKWVISMGACASSGGMFNNYAIVQNVDSVVPVDVYVPGCPPRPEALIYAVMQLQKKVRGQAYNERGERLPPVAAWKRTRG.

[4Fe-4S] cluster is bound by residues C45, C46, C111, and C140.

It belongs to the complex I 20 kDa subunit family. NDH-1 is composed of 14 different subunits. Subunits NuoB, C, D, E, F, and G constitute the peripheral sector of the complex. [4Fe-4S] cluster serves as cofactor.

It is found in the cell inner membrane. It carries out the reaction a quinone + NADH + 5 H(+)(in) = a quinol + NAD(+) + 4 H(+)(out). Its function is as follows. NDH-1 shuttles electrons from NADH, via FMN and iron-sulfur (Fe-S) centers, to quinones in the respiratory chain. The immediate electron acceptor for the enzyme in this species is believed to be ubiquinone. Couples the redox reaction to proton translocation (for every two electrons transferred, four hydrogen ions are translocated across the cytoplasmic membrane), and thus conserves the redox energy in a proton gradient. The chain is NADH-quinone oxidoreductase subunit B (nuoB) from Thermus thermophilus (strain ATCC BAA-163 / DSM 7039 / HB27).